A 741-amino-acid chain; its full sequence is Ion-translocating oxidoreductase complex subunit C (741 aa).

2 4Fe-4S ferredoxin-type domains span residues 369 to 397 and 407 to 436; these read GEPQ…QQLY and KATT…VQYF. 8 residues coordinate [4Fe-4S] cluster: C377, C380, C383, C387, C416, C419, C422, and C426. A disordered region spans residues 627–654; that stretch reads IARAKARKLEQQQQANAEPEEQVDPRKA.

This sequence belongs to the 4Fe4S bacterial-type ferredoxin family. RnfC subfamily. As to quaternary structure, the complex is composed of six subunits: RsxA, RsxB, RsxC, RsxD, RsxE and RsxG. [4Fe-4S] cluster serves as cofactor.

It localises to the cell inner membrane. In terms of biological role, part of a membrane-bound complex that couples electron transfer with translocation of ions across the membrane. Required to maintain the reduced state of SoxR. The sequence is that of Ion-translocating oxidoreductase complex subunit C from Escherichia coli O127:H6 (strain E2348/69 / EPEC).